The following is a 711-amino-acid chain: MKFFASCAKGLEYLLADELLALGASKATATISGVNVEGALRDAQRAVLWSRLASRVLWPLTEFDCPDEDALYAGVAELPWHEHLSTGHTLSVDAHVSGTAITHARYAAQRIKDAVVDTIRRQGLERPSVDVESPDLRLNLSLRKGRATISVDLGGGPLHRRGWRMAQNEAPLKENLAAAVLLRAGWPRAYADGGGLLDPMCGSGTLLIEGALMAADVAPGLQRYGSDIPSRWRGFDRDSWQQLVTEARERDSVGRAALKQVIHGSDMDPHAIRAAKENAQVAGVAEAIWFGVREVGDLQTRPQATGVVVCNPPYDERLAADAALYRKLGDTLQRVVPQWRASLLCGNAELAYATGLRAGKKYQLFNGAIECALIVCDPIAVPRRTPLAAPTALSEGAQMVANRLRKNLQKFKKWRAREGIECFRVYDADLPEYSAAIDVYQQADGDRRIFLHVQEYAAPATIPEADVRRRLGELLAAAREVFEVPAERVALKSRERGKGGSKYGRFEQRNEIVNVREHGALLRVNLFDYLDTGLFLDHRPLRGTMAQQSKGRRFLNLFCYTGVASVQAAVAGASATTSVDLSGTYLQWCADNLALNGQAGSKHKLVQADALAWLEAERAHFDVIFCDPPTFSNSARAEDFDIQREHVRLLRAAVARLAPGGVLYFSNNFRRFKLDEEAVSEFAQCEEISPRTIDPDFERHARIHRAWRLTA.

A THUMP domain is found at 42–153 (DAQRAVLWSR…KGRATISVDL (112 aa)).

This sequence belongs to the methyltransferase superfamily. RlmKL family.

The protein localises to the cytoplasm. The enzyme catalyses guanosine(2445) in 23S rRNA + S-adenosyl-L-methionine = N(2)-methylguanosine(2445) in 23S rRNA + S-adenosyl-L-homocysteine + H(+). The catalysed reaction is guanosine(2069) in 23S rRNA + S-adenosyl-L-methionine = N(2)-methylguanosine(2069) in 23S rRNA + S-adenosyl-L-homocysteine + H(+). Functionally, specifically methylates the guanine in position 2445 (m2G2445) and the guanine in position 2069 (m7G2069) of 23S rRNA. This is Ribosomal RNA large subunit methyltransferase K/L from Xanthomonas campestris pv. campestris (strain 8004).